The chain runs to 330 residues: Phosphate acyltransferase (330 aa).

This sequence belongs to the PlsX family. Homodimer. Probably interacts with PlsY.

It is found in the cytoplasm. The catalysed reaction is a fatty acyl-[ACP] + phosphate = an acyl phosphate + holo-[ACP]. Its pathway is lipid metabolism; phospholipid metabolism. Catalyzes the reversible formation of acyl-phosphate (acyl-PO(4)) from acyl-[acyl-carrier-protein] (acyl-ACP). This enzyme utilizes acyl-ACP as fatty acyl donor, but not acyl-CoA. The protein is Phosphate acyltransferase of Campylobacter hominis (strain ATCC BAA-381 / DSM 21671 / CCUG 45161 / LMG 19568 / NCTC 13146 / CH001A).